The following is a 120-amino-acid chain: Large ribosomal subunit protein bL20 (120 aa).

Belongs to the bacterial ribosomal protein bL20 family.

Its function is as follows. Binds directly to 23S ribosomal RNA and is necessary for the in vitro assembly process of the 50S ribosomal subunit. It is not involved in the protein synthesizing functions of that subunit. This is Large ribosomal subunit protein bL20 from Karelsulcia muelleri (strain GWSS) (Sulcia muelleri).